Here is a 252-residue protein sequence, read N- to C-terminus: Chitooligosaccharide deacetylase (252 aa).

His61 and His125 together coordinate Mg(2+).

Belongs to the YdjC deacetylase family. ChbG subfamily. As to quaternary structure, homodimer. It depends on Mg(2+) as a cofactor.

It localises to the cytoplasm. It carries out the reaction N,N'-diacetylchitobiose + H2O = N-acetyl-beta-D-glucosaminyl-(1-&gt;4)-D-glucosamine + acetate. The enzyme catalyses diacetylchitobiose-6'-phosphate + H2O = N'-monoacetylchitobiose-6'-phosphate + acetate. It participates in glycan degradation; chitin degradation. Involved in the degradation of chitin. ChbG is essential for growth on the acetylated chitooligosaccharides chitobiose and chitotriose but is dispensable for growth on cellobiose and chitosan dimer, the deacetylated form of chitobiose. Deacetylation of chitobiose-6-P and chitotriose-6-P is necessary for both the activation of the chb promoter by the regulatory protein ChbR and the hydrolysis of phosphorylated beta-glucosides by the phospho-beta-glucosidase ChbF. Catalyzes the removal of only one acetyl group from chitobiose-6-P to yield monoacetylchitobiose-6-P, the inducer of ChbR and the substrate of ChbF. This chain is Chitooligosaccharide deacetylase, found in Escherichia coli (strain 55989 / EAEC).